The sequence spans 475 residues: Ribulose bisphosphate carboxylase large chain (475 aa).

Residues M1–S2 constitute a propeptide that is removed on maturation. P3 is subject to N-acetylproline. Residue K14 is modified to N6,N6,N6-trimethyllysine. The substrate site is built by N123 and T173. K175 (proton acceptor) is an active-site residue. K177 is a substrate binding site. Mg(2+)-binding residues include K201, D203, and E204. Residue K201 is modified to N6-carboxylysine. Catalysis depends on H294, which acts as the Proton acceptor. Substrate is bound by residues R295, H327, and S379.

The protein belongs to the RuBisCO large chain family. Type I subfamily. As to quaternary structure, heterohexadecamer of 8 large chains and 8 small chains; disulfide-linked. The disulfide link is formed within the large subunit homodimers. Mg(2+) is required as a cofactor. Post-translationally, the disulfide bond which can form in the large chain dimeric partners within the hexadecamer appears to be associated with oxidative stress and protein turnover.

The protein localises to the plastid. The protein resides in the chloroplast. It catalyses the reaction 2 (2R)-3-phosphoglycerate + 2 H(+) = D-ribulose 1,5-bisphosphate + CO2 + H2O. The catalysed reaction is D-ribulose 1,5-bisphosphate + O2 = 2-phosphoglycolate + (2R)-3-phosphoglycerate + 2 H(+). Its function is as follows. RuBisCO catalyzes two reactions: the carboxylation of D-ribulose 1,5-bisphosphate, the primary event in carbon dioxide fixation, as well as the oxidative fragmentation of the pentose substrate in the photorespiration process. Both reactions occur simultaneously and in competition at the same active site. This Angiopteris evecta (Mule's foot fern) protein is Ribulose bisphosphate carboxylase large chain.